A 316-amino-acid chain; its full sequence is Ribosomal RNA small subunit methyltransferase H (316 aa).

Residues 35–37, Asp55, Phe79, Asp101, and Gln108 each bind S-adenosyl-L-methionine; that span reads GGH. Positions 291 to 316 are disordered; the sequence is AIKPSKDEVDENTRSRSSVLRIAEKL. Basic and acidic residues predominate over residues 294–304; that stretch reads PSKDEVDENTR.

This sequence belongs to the methyltransferase superfamily. RsmH family.

Its subcellular location is the cytoplasm. The enzyme catalyses cytidine(1402) in 16S rRNA + S-adenosyl-L-methionine = N(4)-methylcytidine(1402) in 16S rRNA + S-adenosyl-L-homocysteine + H(+). Functionally, specifically methylates the N4 position of cytidine in position 1402 (C1402) of 16S rRNA. The chain is Ribosomal RNA small subunit methyltransferase H from Vibrio atlanticus (strain LGP32) (Vibrio splendidus (strain Mel32)).